The following is a 1375-amino-acid chain: DNA-directed RNA polymerase subunit beta (1375 aa).

The protein belongs to the RNA polymerase beta chain family. As to quaternary structure, the RNAP catalytic core consists of 2 alpha, 1 beta, 1 beta' and 1 omega subunit. When a sigma factor is associated with the core the holoenzyme is formed, which can initiate transcription.

It catalyses the reaction RNA(n) + a ribonucleoside 5'-triphosphate = RNA(n+1) + diphosphate. Functionally, DNA-dependent RNA polymerase catalyzes the transcription of DNA into RNA using the four ribonucleoside triphosphates as substrates. The chain is DNA-directed RNA polymerase subunit beta from Coxiella burnetii (strain CbuG_Q212) (Coxiella burnetii (strain Q212)).